The primary structure comprises 368 residues: Putative potassium channel KAT5 (368 aa).

Helical transmembrane passes span 33–53, 97–117, and 132–152; these read WWHM…PFEL, LLNL…ARVE, and LLCV…WMVF. Positions 180 to 199 form an intramembrane region, pore-forming; it reads CAVYWSITTLATVGYGDLHA. The chain crosses the membrane as a helical span at residues 206 to 226; it reads LFSIAFMLFNMGLTSYIIGNI. 225–344 is a binding site for a nucleoside 3',5'-cyclic phosphate; that stretch reads NITNLVVRET…CIVFSNFILV (120 aa).

Belongs to the potassium channel family. Plant (TC 1.A.1.4) subfamily.

Its subcellular location is the membrane. Functionally, putative inward-rectifying potassium channel. This Oryza sativa subsp. japonica (Rice) protein is Putative potassium channel KAT5.